We begin with the raw amino-acid sequence, 115 residues long: Large ribosomal subunit protein bL19 (115 aa).

Belongs to the bacterial ribosomal protein bL19 family.

Its function is as follows. This protein is located at the 30S-50S ribosomal subunit interface and may play a role in the structure and function of the aminoacyl-tRNA binding site. In Streptococcus equi subsp. zooepidemicus (strain H70), this protein is Large ribosomal subunit protein bL19.